The sequence spans 759 residues: Putative ATP-dependent DNA helicase YjcD (759 aa).

The segment at 68-121 (ACEPKPSKEGKKEDDQESGVIRLPKGKAIAADPSPAVTEWHRPRSIKPGTPFVP) is disordered. A compositionally biased stretch (basic and acidic residues) spans 69–81 (CEPKPSKEGKKED). The region spanning 134 to 413 (VGLNTDQLKA…IYLTANYRST (280 aa)) is the UvrD-like helicase ATP-binding domain. ATP contacts are provided by residues 158-163 (GSGKTR) and Arg411. One can recognise a UvrD-like helicase C-terminal domain in the interval 414 to 676 (HPIVSSADIV…QLMTIHRSKG (263 aa)).

The protein belongs to the helicase family. UvrD subfamily.

It localises to the cytoplasm. The enzyme catalyses Couples ATP hydrolysis with the unwinding of duplex DNA by translocating in the 3'-5' direction.. It catalyses the reaction ATP + H2O = ADP + phosphate + H(+). Its function is as follows. May be involved in the generation of recombinogenic substrates for the subsequent action of RecA. This Bacillus subtilis (strain 168) protein is Putative ATP-dependent DNA helicase YjcD (yjcD).